A 93-amino-acid polypeptide reads, in one-letter code: UPF0390 protein C24B10.18 (93 aa).

Residues 1-32 form a disordered region; sequence MAQGEFKKKKNSSANKGGRVTKHSKNPKKGAR. Residues 19-31 are compositionally biased toward basic residues; the sequence is RVTKHSKNPKKGA.

This sequence belongs to the UPF0390 family.

This is UPF0390 protein C24B10.18 from Schizosaccharomyces pombe (strain 972 / ATCC 24843) (Fission yeast).